Here is a 132-residue protein sequence, read N- to C-terminus: Fluoride-specific ion channel FluC 3 (132 aa).

4 helical membrane passes run 4 to 24 (ILLV…FGGW), 32 to 52 (FPVG…LIMY), 66 to 86 (IFLT…GYES), and 95 to 115 (LMLM…AVYL). Na(+)-binding residues include Gly74 and Thr77.

Belongs to the fluoride channel Fluc/FEX (TC 1.A.43) family.

The protein resides in the cell membrane. It carries out the reaction fluoride(in) = fluoride(out). Na(+) is not transported, but it plays an essential structural role and its presence is essential for fluoride channel function. Functionally, fluoride-specific ion channel. Important for reducing fluoride concentration in the cell, thus reducing its toxicity. This chain is Fluoride-specific ion channel FluC 3, found in Methanosarcina barkeri (strain Fusaro / DSM 804).